The following is a 791-amino-acid chain: Vezatin (791 aa).

Helical transmembrane passes span 138–158 (IATPNIWEMSVLFAFLSALAA) and 163–183 (SISSSLVWGPSLILFAAFTVL). A coiled-coil region spans residues 435-464 (VRSLQLHLKALLNEVIILEDELEKLSSCKE). Acidic residues predominate over residues 752 to 769 (GDEWDDDDDDNDNDDDNY). The segment at 752 to 791 (GDEWDDDDDDNDNDDDNYDQVKNVESHEKERNNVSLQLEE) is disordered. Basic and acidic residues predominate over residues 773–783 (KNVESHEKERN).

It belongs to the vezatin family. As to quaternary structure, interacts with myosin VIIa and the cadherin-catenins complex.

It localises to the cell membrane. The protein localises to the cell junction. The protein resides in the adherens junction. Its subcellular location is the nucleus. Functionally, plays a pivotal role in the establishment of adherens junctions and their maintenance in adult life. This chain is Vezatin (vezt), found in Xenopus tropicalis (Western clawed frog).